A 735-amino-acid polypeptide reads, in one-letter code: Polyribonucleotide nucleotidyltransferase (735 aa).

Residues aspartate 515 and aspartate 521 each coordinate Mg(2+). Residues 581 to 641 (PKLELFSVDP…KNVDAAKDYI (61 aa)) form the KH domain. A disordered region spans residues 649-671 (NSRGFGKKPHGHDRRDKDRQKPT). One can recognise an S1 motif domain in the interval 675 to 734 (GDEFDGVVKSVVDFGAFIELKDGVDGLLHISKIKTPLNVGDRLKVCVSEQKGNKISLSLV).

The protein belongs to the polyribonucleotide nucleotidyltransferase family. The cofactor is Mg(2+).

Its subcellular location is the cytoplasm. The enzyme catalyses RNA(n+1) + phosphate = RNA(n) + a ribonucleoside 5'-diphosphate. Involved in mRNA degradation. Catalyzes the phosphorolysis of single-stranded polyribonucleotides processively in the 3'- to 5'-direction. The protein is Polyribonucleotide nucleotidyltransferase of Campylobacter curvus (strain 525.92).